We begin with the raw amino-acid sequence, 149 residues long: MFRGITTLNLDAKGRLSIPAKYRKSLGICCDGKVIITVDLLEPCLQLYPLPEWEIVERKLVALPSHNRQARYIKRRLIGHAEECELDGHGRILLPLELRSRTELGKNISLVGQGNKFELWDSMVWERQMAKEEASAKEELTRELALLAL.

SpoVT-AbrB domains follow at residues 5–52 (ITTL…PLPE) and 81–124 (AEEC…DSMV).

It belongs to the MraZ family. Forms oligomers.

Its subcellular location is the cytoplasm. It localises to the nucleoid. The protein is Transcriptional regulator MraZ of Nitrosococcus oceani (strain ATCC 19707 / BCRC 17464 / JCM 30415 / NCIMB 11848 / C-107).